Consider the following 227-residue polypeptide: MAYPFQLGLQDATSPIMEELLHFHDHTLMIVFLISSLILYIISLMLTTKLTHTSTMDAQEVETVWTILPAIILILIALPSLRILYMMDEINNPSLTVKTMGHQWYWSYEYTDYEDLNFDSYMIPTQELKPGELRLLEVDNRVVLPMEMTIRMLISSEDVLHSWAVPSLGLKTDAIPGRLNQTTLMATRPGLYYGQCSEICGSNHSFMPIVLEMVPLSYFETWSALMV.

The Mitochondrial intermembrane portion of the chain corresponds to 1–14; the sequence is MAYPFQLGLQDATS. The chain crosses the membrane as a helical span at residues 15-45; the sequence is PIMEELLHFHDHTLMIVFLISSLILYIISLM. The Mitochondrial matrix segment spans residues 46-59; it reads LTTKLTHTSTMDAQ. A helical transmembrane segment spans residues 60–87; that stretch reads EVETVWTILPAIILILIALPSLRILYMM. The Mitochondrial intermembrane portion of the chain corresponds to 88 to 227; it reads DEINNPSLTV…YFETWSALMV (140 aa). Cu cation-binding residues include H161, C196, E198, C200, H204, and M207. E198 lines the Mg(2+) pocket. At Y218 the chain carries Phosphotyrosine.

Belongs to the cytochrome c oxidase subunit 2 family. Component of the cytochrome c oxidase (complex IV, CIV), a multisubunit enzyme composed of 14 subunits. The complex is composed of a catalytic core of 3 subunits MT-CO1, MT-CO2 and MT-CO3, encoded in the mitochondrial DNA, and 11 supernumerary subunits COX4I, COX5A, COX5B, COX6A, COX6B, COX6C, COX7A, COX7B, COX7C, COX8 and NDUFA4, which are encoded in the nuclear genome. The complex exists as a monomer or a dimer and forms supercomplexes (SCs) in the inner mitochondrial membrane with NADH-ubiquinone oxidoreductase (complex I, CI) and ubiquinol-cytochrome c oxidoreductase (cytochrome b-c1 complex, complex III, CIII), resulting in different assemblies (supercomplex SCI(1)III(2)IV(1) and megacomplex MCI(2)III(2)IV(2)). Found in a complex with TMEM177, COA6, COX18, COX20, SCO1 and SCO2. Interacts with TMEM177 in a COX20-dependent manner. Interacts with COX20. Interacts with COX16. Cu cation is required as a cofactor.

Its subcellular location is the mitochondrion inner membrane. The enzyme catalyses 4 Fe(II)-[cytochrome c] + O2 + 8 H(+)(in) = 4 Fe(III)-[cytochrome c] + 2 H2O + 4 H(+)(out). Its function is as follows. Component of the cytochrome c oxidase, the last enzyme in the mitochondrial electron transport chain which drives oxidative phosphorylation. The respiratory chain contains 3 multisubunit complexes succinate dehydrogenase (complex II, CII), ubiquinol-cytochrome c oxidoreductase (cytochrome b-c1 complex, complex III, CIII) and cytochrome c oxidase (complex IV, CIV), that cooperate to transfer electrons derived from NADH and succinate to molecular oxygen, creating an electrochemical gradient over the inner membrane that drives transmembrane transport and the ATP synthase. Cytochrome c oxidase is the component of the respiratory chain that catalyzes the reduction of oxygen to water. Electrons originating from reduced cytochrome c in the intermembrane space (IMS) are transferred via the dinuclear copper A center (CU(A)) of subunit 2 and heme A of subunit 1 to the active site in subunit 1, a binuclear center (BNC) formed by heme A3 and copper B (CU(B)). The BNC reduces molecular oxygen to 2 water molecules using 4 electrons from cytochrome c in the IMS and 4 protons from the mitochondrial matrix. The chain is Cytochrome c oxidase subunit 2 (MT-CO2) from Canis simensis (Ethiopian wolf).